The following is a 251-amino-acid chain: 3-deoxy-manno-octulosonate cytidylyltransferase (251 aa).

The protein belongs to the KdsB family.

It localises to the cytoplasm. The catalysed reaction is 3-deoxy-alpha-D-manno-oct-2-ulosonate + CTP = CMP-3-deoxy-beta-D-manno-octulosonate + diphosphate. It functions in the pathway nucleotide-sugar biosynthesis; CMP-3-deoxy-D-manno-octulosonate biosynthesis; CMP-3-deoxy-D-manno-octulosonate from 3-deoxy-D-manno-octulosonate and CTP: step 1/1. Its pathway is bacterial outer membrane biogenesis; lipopolysaccharide biosynthesis. Its function is as follows. Activates KDO (a required 8-carbon sugar) for incorporation into bacterial lipopolysaccharide in Gram-negative bacteria. The sequence is that of 3-deoxy-manno-octulosonate cytidylyltransferase from Rhizobium etli (strain CIAT 652).